The sequence spans 603 residues: Terpenoid synthase 25 (603 aa).

Residues D356, D360, N500, T504, and E508 each contribute to the Mg(2+) site. The DDXXD motif motif lies at 356 to 360 (DDTCD).

This sequence belongs to the terpene synthase family. Tpsa subfamily. It depends on Mg(2+) as a cofactor. Requires Mn(2+) as cofactor. In terms of tissue distribution, predominantly expressed in roots but also in flowers.

It localises to the cytoplasm. The protein operates within secondary metabolite biosynthesis; terpenoid biosynthesis. Its function is as follows. Involved in terpene biosynthesis in roots. Possesses sesquiterpene (C15) synthase activity in vitro. Does not seem to be involved in diterpene (C20) biosynthesis. This chain is Terpenoid synthase 25, found in Arabidopsis thaliana (Mouse-ear cress).